The sequence spans 91 residues: Class I hydrophobin 3 (91 aa).

A signal peptide spans 1-17 (MLFRLFTIPSIALGVLG). Disulfide bonds link C31-C70, C35-C61, C36-C53, and C71-C87.

It belongs to the fungal hydrophobin family. Self-assembles to form functional amyloid fibrils called rodlets. Self-assembly into fibrillar rodlets occurs spontaneously at hydrophobic:hydrophilic interfaces and the rodlets further associate laterally to form amphipathic monolayers. In terms of tissue distribution, expressed in conidia.

The protein localises to the secreted. The protein resides in the cell wall. Functionally, aerial growth, conidiation, and dispersal of filamentous fungi in the environment rely upon a capability of their secreting small amphipathic proteins called hydrophobins (HPBs) with low sequence identity. Class I can self-assemble into an outermost layer of rodlet bundles on aerial cell surfaces, conferring cellular hydrophobicity that supports fungal growth, development and dispersal; whereas Class II form highly ordered films at water-air interfaces through intermolecular interactions but contribute nothing to the rodlet structure. HYD3 is a class I hydrophobin located on the conidial surface that activates specifically the humoral and cellular immunity of Metarhizium acridum's own host insect, Locusta migratoria manilensis (Meyen) but not that of other non-host insects. Improves the resistance of locusts to both specialist and generalist fungal pathogens (wide host range) when topically applied to the cuticle, but has no effect on the fungal resistance of other insects, including Spodoptera frugiperda and Galleria mellonella. The protein is Class I hydrophobin 3 of Metarhizium acridum (strain CQMa 102).